The chain runs to 554 residues: RecBCD enzyme subunit RecD (554 aa).

155–162 (GGPGTGKT) serves as a coordination point for ATP.

Belongs to the RecD family. Heterotrimer of RecB, RecC and RecD. All subunits contribute to DNA-binding.

The catalysed reaction is Couples ATP hydrolysis with the unwinding of duplex DNA at the replication fork by translocating in the 5'-3' direction. This creates two antiparallel DNA single strands (ssDNA). The leading ssDNA polymer is the template for DNA polymerase III holoenzyme which synthesizes a continuous strand.. The enzyme catalyses ATP + H2O = ADP + phosphate + H(+). Functionally, a helicase/nuclease that prepares dsDNA breaks (DSB) for recombinational DNA repair. Binds to DSBs and unwinds DNA via a highly rapid and processive ATP-dependent bidirectional helicase activity. Holoenzyme degrades any linearized DNA that is unable to undergo homologous recombination. In the holoenzyme this subunit has ssDNA-dependent ATPase and 5'-3' helicase activity. When added to pre-assembled RecBC greatly stimulates nuclease activity and augments holoenzyme processivity. Unlike the case in E.coli, suppresses RecA-dependent homologous recombination, is instead required for single-strand annealing pathway repair of DSB. The sequence is that of RecBCD enzyme subunit RecD from Mycolicibacterium smegmatis (strain ATCC 700084 / mc(2)155) (Mycobacterium smegmatis).